Here is a 366-residue protein sequence, read N- to C-terminus: 3-dehydroquinate synthase (366 aa).

Residues 75–80 (DGEEYK), 109–113 (GVVGD), 133–134 (TT), lysine 146, lysine 155, and 173–176 (TLDT) contribute to the NAD(+) site. Glutamate 188, histidine 251, and histidine 268 together coordinate Zn(2+).

This sequence belongs to the sugar phosphate cyclases superfamily. Dehydroquinate synthase family. The cofactor is Co(2+). Zn(2+) serves as cofactor. NAD(+) is required as a cofactor.

The protein localises to the cytoplasm. The catalysed reaction is 7-phospho-2-dehydro-3-deoxy-D-arabino-heptonate = 3-dehydroquinate + phosphate. Its pathway is metabolic intermediate biosynthesis; chorismate biosynthesis; chorismate from D-erythrose 4-phosphate and phosphoenolpyruvate: step 2/7. Its function is as follows. Catalyzes the conversion of 3-deoxy-D-arabino-heptulosonate 7-phosphate (DAHP) to dehydroquinate (DHQ). This Nitrosospira multiformis (strain ATCC 25196 / NCIMB 11849 / C 71) protein is 3-dehydroquinate synthase.